The chain runs to 787 residues: Phenylalanine--tRNA ligase beta subunit (787 aa).

Residues alanine 39–arginine 149 form the tRNA-binding domain. Positions proline 400–aspartate 475 constitute a B5 domain. Mg(2+) is bound by residues aspartate 453, aspartate 459, glutamate 462, and glutamate 463. The FDX-ACB domain maps to serine 694–arginine 786.

It belongs to the phenylalanyl-tRNA synthetase beta subunit family. Type 1 subfamily. In terms of assembly, tetramer of two alpha and two beta subunits. Requires Mg(2+) as cofactor.

It is found in the cytoplasm. It catalyses the reaction tRNA(Phe) + L-phenylalanine + ATP = L-phenylalanyl-tRNA(Phe) + AMP + diphosphate + H(+). This Neisseria gonorrhoeae (strain ATCC 700825 / FA 1090) protein is Phenylalanine--tRNA ligase beta subunit.